The chain runs to 630 residues: MKREYQDAGGSGGDMGSSKDKMMAAAAGAGEQEEEDVDELLAALGYKVRSSDMADVAQKLEQLEMAMGMGGVGGAGATADDGFVSHLATDTVHYNPSDLSSWVESMLSELNAPPAPLPPATPAPRLASTSSTVTSGAAAGAGYFDLPPAVDSSSSTYALKPIPSPVAAPSADPSTDSAREPKRMRTGGGSTSSSSSSSSSMDGGRTRSSVVEAAPPATQASAAANGPAVPVVVVDTQEAGIRLVHALLACAEAVQQENFSAAEALVKQIPMLASSQGGAMRKVAAYFGEALARRVYRFRPPPDSSLLDAAFADLLHAHFYESCPYLKFAHFTANQAILEAFAGCRRVHVVDFGIKQGMQWPALLQALALRPGGPPSFRLTGVGPPQPDETDALQQVGWKLAQFAHTIRVDFQYRGLVAATLADLEPFMLQPEGDDTDDEPEVIAVNSVFELHRLLAQPGALEKVLGTVRAVRPRIVTVVEQEANHNSGTFLDRFTESLHYYSTMFDSLEGAGAGSGQSTDASPAAAGGTDQVMSEVYLGRQICNVVACEGAERTERHETLGQWRSRLGGSGFAPVHLGSNAYKQASTLLALFAGGDGYRVEEKDGCLTLGWHTRPLIATSAWRVAAAAAP.

The tract at residues 1–35 (MKREYQDAGGSGGDMGSSKDKMMAAAAGAGEQEEE) is disordered. The DELLA motif motif lies at 38 to 42 (DELLA). The segment at 161-222 (PIPSPVAAPS…AAPPATQASA (62 aa)) is disordered. Composition is skewed to low complexity over residues 165-176 (PVAAPSADPSTD) and 191-222 (TSSS…QASA). In terms of domain architecture, GRAS spans 234–623 (VDTQEAGIRL…RPLIATSAWR (390 aa)). A leucine repeat I (LRI) region spans residues 241–297 (IRLVHALLACAEAVQQENFSAAEALVKQIPMLASSQGGAMRKVAAYFGEALARRVYR). The LxCxE motif signature appears at 248–252 (LACAE). The tract at residues 316-381 (HAHFYESCPY…GGPPSFRLTG (66 aa)) is VHIID. A VHIID motif is present at residues 347-351 (VHVVD). The interval 395 to 427 (QVGWKLAQFAHTIRVDFQYRGLVAATLADLEPF) is leucine repeat II (LRII). The segment at 443–544 (IAVNSVFELH…EVYLGRQICN (102 aa)) is PFYRE. Positions 451–455 (LHRLL) match the LXXLL motif motif. The tract at residues 547-623 (ACEGAERTER…RPLIATSAWR (77 aa)) is SAW.

Belongs to the GRAS family. DELLA subfamily. In terms of processing, phosphorylated. Ubiquitinated. Upon GA application it is ubiquitinated, leading to its subsequent degradation.

The protein localises to the nucleus. Its function is as follows. Probable transcriptional regulator that acts as a repressor of the gibberellin (GA) signaling pathway. Probably acts by participating in large multiprotein complexes that repress transcription of GA-inducible genes. Upon GA application, it is degraded by the proteasome, allowing the GA signaling pathway. This is DELLA protein DWARF8 (D8) from Zea mays (Maize).